The following is a 234-amino-acid chain: Methylamine utilization ferredoxin-type protein MauM (234 aa).

4Fe-4S ferredoxin-type domains lie at 61–91 (ALAE…LASW), 98–131 (GTPF…PLLT), 140–176 (VAVL…LKPI), and 184–215 (QIPT…VLPR). [4Fe-4S] cluster-binding residues include C71, C74, C77, C81, C109, C112, C117, C121, C149, C157, C160, C164, C193, C196, C199, and C203.

Its pathway is one-carbon metabolism; methylamine degradation. Involved in electron transfer. The polypeptide is Methylamine utilization ferredoxin-type protein MauM (mauM) (Methylobacillus flagellatus (strain ATCC 51484 / DSM 6875 / VKM B-1610 / KT)).